A 186-amino-acid polypeptide reads, in one-letter code: Ribosome-recycling factor (186 aa).

Residues 135–164 (DGMDDLKKAEKDGEIGQDESRAQSERVQKM) are disordered.

This sequence belongs to the RRF family.

Its subcellular location is the cytoplasm. Responsible for the release of ribosomes from messenger RNA at the termination of protein biosynthesis. May increase the efficiency of translation by recycling ribosomes from one round of translation to another. The chain is Ribosome-recycling factor from Rhizobium meliloti (strain 1021) (Ensifer meliloti).